A 159-amino-acid polypeptide reads, in one-letter code: Cyclic pyranopterin monophosphate synthase (159 aa).

Substrate is bound by residues 76–78 (LCH) and 114–115 (ME). Asp129 is an active-site residue.

This sequence belongs to the MoaC family. Homohexamer; trimer of dimers.

It catalyses the reaction (8S)-3',8-cyclo-7,8-dihydroguanosine 5'-triphosphate = cyclic pyranopterin phosphate + diphosphate. Its pathway is cofactor biosynthesis; molybdopterin biosynthesis. Its function is as follows. Catalyzes the conversion of (8S)-3',8-cyclo-7,8-dihydroguanosine 5'-triphosphate to cyclic pyranopterin monophosphate (cPMP). In Oleidesulfovibrio alaskensis (strain ATCC BAA-1058 / DSM 17464 / G20) (Desulfovibrio alaskensis), this protein is Cyclic pyranopterin monophosphate synthase.